The following is a 381-amino-acid chain: Probable tRNA sulfurtransferase (381 aa).

The 104-residue stretch at 52–155 (LTNLDALKYV…DASTYIFIDY (104 aa)) folds into the THUMP domain. ATP-binding positions include 173-174 (LM), 198-199 (NF), arginine 255, glycine 277, and glutamine 286.

It belongs to the ThiI family.

It localises to the cytoplasm. It carries out the reaction [ThiI sulfur-carrier protein]-S-sulfanyl-L-cysteine + a uridine in tRNA + 2 reduced [2Fe-2S]-[ferredoxin] + ATP + H(+) = [ThiI sulfur-carrier protein]-L-cysteine + a 4-thiouridine in tRNA + 2 oxidized [2Fe-2S]-[ferredoxin] + AMP + diphosphate. The catalysed reaction is [ThiS sulfur-carrier protein]-C-terminal Gly-Gly-AMP + S-sulfanyl-L-cysteinyl-[cysteine desulfurase] + AH2 = [ThiS sulfur-carrier protein]-C-terminal-Gly-aminoethanethioate + L-cysteinyl-[cysteine desulfurase] + A + AMP + 2 H(+). It participates in cofactor biosynthesis; thiamine diphosphate biosynthesis. Its function is as follows. Catalyzes the ATP-dependent transfer of a sulfur to tRNA to produce 4-thiouridine in position 8 of tRNAs, which functions as a near-UV photosensor. Also catalyzes the transfer of sulfur to the sulfur carrier protein ThiS, forming ThiS-thiocarboxylate. This is a step in the synthesis of thiazole, in the thiamine biosynthesis pathway. The sulfur is donated as persulfide by IscS. This chain is Probable tRNA sulfurtransferase, found in Metamycoplasma arthritidis (strain 158L3-1) (Mycoplasma arthritidis).